The sequence spans 153 residues: Vasotocin-neurophysin VT 1 (153 aa).

Positions 1-20 are cleaved as a signal peptide; that stretch reads MPYSTFPLLWVLGLLALSSA. Cysteine 21 and cysteine 26 are disulfide-bonded. Glycine 29 is modified (glycine amide). 7 disulfide bridges follow: cysteine 41–cysteine 85, cysteine 44–cysteine 58, cysteine 52–cysteine 75, cysteine 59–cysteine 65, cysteine 92–cysteine 104, cysteine 98–cysteine 116, and cysteine 105–cysteine 110.

It belongs to the vasopressin/oxytocin family. In terms of processing, seven disulfide bonds are present in neurophysin.

The protein localises to the secreted. Its function is as follows. Vasotocin is an antidiuretic hormone. This Oncorhynchus keta (Chum salmon) protein is Vasotocin-neurophysin VT 1.